A 362-amino-acid chain; its full sequence is MEHNGTAALGWAARDTSGHLSPFSFTRRVQQEDDVTIKVLYCGICHTDLHIIKNEWGNAMYPVVPGHEIVGVVTGVGAGVTKFKAGDTVGVGYFVDSCRACDSCGKGYENYCPTMVITSNGTDYGGATTQGGFSDVMVVRQDYVVRVPASLPPDGAAPLLCAGVTVYSPMVEYGLNGPGKHLGVVGLGGLGHLGVKFGKAFGMKVTVISSSPAKRGEALGRLGADAFLSSRDGEGMAAAAATMDGIIDTVSAGHPLVPLLSLLKPKGQMVVVGAPAMPLQLPAYAIIEGGKRVAGNGVGSVAECQAMLDFAGEHGIAADVEVVAMDAVNAALGRLERNDVRYRFVVDVAGTMHAAAAAAASS.

Residue C45 coordinates Zn(2+). T47 provides a ligand contact to NADP(+). The Zn(2+) site is built by H67, E68, C98, C101, C104, C112, and C161. NADP(+) contacts are provided by residues T165, 186–191 (GLGGLG), 209–214 (SSSPAK), T249, G273, and 296–298 (NGV).

This sequence belongs to the zinc-containing alcohol dehydrogenase family. Homodimer. Requires Zn(2+) as cofactor.

The enzyme catalyses (E)-cinnamyl alcohol + NADP(+) = (E)-cinnamaldehyde + NADPH + H(+). It catalyses the reaction (E)-coniferol + NADP(+) = (E)-coniferaldehyde + NADPH + H(+). It carries out the reaction (E)-sinapyl alcohol + NADP(+) = (E)-sinapaldehyde + NADPH + H(+). The catalysed reaction is (E)-4-coumaroyl alcohol + NADP(+) = (E)-4-coumaraldehyde + NADPH + H(+). The enzyme catalyses (E)-caffeyl alcohol + NADP(+) = (E)-caffeyl aldehyde + NADPH + H(+). Its pathway is aromatic compound metabolism; phenylpropanoid biosynthesis. Functionally, involved in lignin biosynthesis. Catalyzes the final step specific for the production of lignin monomers. Catalyzes the NADPH-dependent reduction of coniferaldehyde, 5-hydroxyconiferaldehyde, sinapaldehyde, 4-coumaraldehyde and caffeyl aldehyde to their respective alcohols. The sequence is that of Probable cinnamyl alcohol dehydrogenase 8D from Oryza sativa subsp. japonica (Rice).